The primary structure comprises 197 residues: MNRKTGTTTVGIRVKDGVILAADTQASLDHMVETLNIRKIIPITDRIAITTAGSVGDVQMIARILEAEARYYQFTWGRPMTTRAMANLLSNILNENKWFPYLVQIIIGGYVDEPTIANLDPLGGLIFDDYTATGSGTPFAIAILEEGYRKNLGIEKAKELAIKAVKAAGARDVYTGSKKIQVVTITKDGMKEEFVTL.

A propeptide spans methionine 1 to glycine 6 (removed in mature form; by autocatalysis). The Nucleophile role is filled by threonine 7.

Belongs to the peptidase T1B family. In terms of assembly, the 20S proteasome core is composed of 14 alpha and 14 beta subunits that assemble into four stacked heptameric rings, resulting in a barrel-shaped structure. The two inner rings, each composed of seven catalytic beta subunits, are sandwiched by two outer rings, each composed of seven alpha subunits. The catalytic chamber with the active sites is on the inside of the barrel. Has a gated structure, the ends of the cylinder being occluded by the N-termini of the alpha-subunits. Is capped at one or both ends by the proteasome regulatory ATPase, PAN.

The protein resides in the cytoplasm. The enzyme catalyses Cleavage of peptide bonds with very broad specificity.. Its activity is regulated as follows. The formation of the proteasomal ATPase PAN-20S proteasome complex, via the docking of the C-termini of PAN into the intersubunit pockets in the alpha-rings, triggers opening of the gate for substrate entry. Interconversion between the open-gate and close-gate conformations leads to a dynamic regulation of the 20S proteasome proteolysis activity. Its function is as follows. Component of the proteasome core, a large protease complex with broad specificity involved in protein degradation. The protein is Proteasome subunit beta 1 of Pyrococcus abyssi (strain GE5 / Orsay).